The following is a 246-amino-acid chain: Triosephosphate isomerase (246 aa).

Residue 9-11 (NWK) coordinates substrate. Catalysis depends on His95, which acts as the Electrophile. Glu165 serves as the catalytic Proton acceptor. Substrate-binding positions include Gly171, Ser210, and 231 to 232 (GG).

This sequence belongs to the triosephosphate isomerase family. Homodimer.

The protein localises to the cytoplasm. It carries out the reaction D-glyceraldehyde 3-phosphate = dihydroxyacetone phosphate. The protein operates within carbohydrate biosynthesis; gluconeogenesis. It functions in the pathway carbohydrate degradation; glycolysis; D-glyceraldehyde 3-phosphate from glycerone phosphate: step 1/1. Its function is as follows. Involved in the gluconeogenesis. Catalyzes stereospecifically the conversion of dihydroxyacetone phosphate (DHAP) to D-glyceraldehyde-3-phosphate (G3P). The sequence is that of Triosephosphate isomerase from Thermodesulfovibrio yellowstonii (strain ATCC 51303 / DSM 11347 / YP87).